The chain runs to 649 residues: Macrolide export ATP-binding/permease protein MacB 1 (649 aa).

Positions 5–243 (LELEGIRRSY…AAAELMSLTP (239 aa)) constitute an ABC transporter domain. Residue 41–48 (GASGSGKS) coordinates ATP. 5 helical membrane passes run 274 to 294 (ALTMLGIIIGIASVVSILVVG), 420 to 440 (VVGQVILVGNMPATVVGVVAE), 524 to 544 (LFLTLVAVISLVVGGIGVMNI), 578 to 598 (VLVCLIGGALGISLSFAIGLI), and 608 to 628 (IAFPPMALFSAFLCSTVIGVV).

This sequence belongs to the ABC transporter superfamily. Macrolide exporter (TC 3.A.1.122) family. In terms of assembly, homodimer. Part of the tripartite efflux system MacAB-TolC, which is composed of an inner membrane transporter, MacB, a periplasmic membrane fusion protein, MacA, and an outer membrane component, TolC. The complex forms a large protein conduit and can translocate molecules across both the inner and outer membranes. Interacts with MacA.

It localises to the cell inner membrane. Part of the tripartite efflux system MacAB-TolC. MacB is a non-canonical ABC transporter that contains transmembrane domains (TMD), which form a pore in the inner membrane, and an ATP-binding domain (NBD), which is responsible for energy generation. Confers resistance against macrolides. In Yersinia pestis bv. Antiqua (strain Antiqua), this protein is Macrolide export ATP-binding/permease protein MacB 1.